We begin with the raw amino-acid sequence, 130 residues long: Profilin-12 (130 aa).

Cysteine 13 and cysteine 115 are disulfide-bonded. The short motif at 81 to 97 (AVIRGKKGSGGITVKKT) is the Involved in PIP2 interaction element. Threonine 111 carries the post-translational modification Phosphothreonine.

The protein belongs to the profilin family. Occurs in many kinds of cells as a complex with monomeric actin in a 1:1 ratio. Post-translationally, phosphorylated by MAP kinases.

Its subcellular location is the cytoplasm. It localises to the cytoskeleton. Functionally, binds to actin and affects the structure of the cytoskeleton. At high concentrations, profilin prevents the polymerization of actin, whereas it enhances it at low concentrations. This is Profilin-12 from Zea mays (Maize).